We begin with the raw amino-acid sequence, 342 residues long: S-adenosylmethionine:tRNA ribosyltransferase-isomerase (342 aa).

The protein belongs to the QueA family. In terms of assembly, monomer.

It localises to the cytoplasm. It carries out the reaction 7-aminomethyl-7-carbaguanosine(34) in tRNA + S-adenosyl-L-methionine = epoxyqueuosine(34) in tRNA + adenine + L-methionine + 2 H(+). The protein operates within tRNA modification; tRNA-queuosine biosynthesis. In terms of biological role, transfers and isomerizes the ribose moiety from AdoMet to the 7-aminomethyl group of 7-deazaguanine (preQ1-tRNA) to give epoxyqueuosine (oQ-tRNA). The protein is S-adenosylmethionine:tRNA ribosyltransferase-isomerase of Streptococcus pneumoniae serotype 19F (strain G54).